Consider the following 141-residue polypeptide: Large ribosomal subunit protein uL11 (141 aa).

It belongs to the universal ribosomal protein uL11 family. In terms of assembly, part of the ribosomal stalk of the 50S ribosomal subunit. Interacts with L10 and the large rRNA to form the base of the stalk. L10 forms an elongated spine to which L12 dimers bind in a sequential fashion forming a multimeric L10(L12)X complex. In terms of processing, one or more lysine residues are methylated.

Functionally, forms part of the ribosomal stalk which helps the ribosome interact with GTP-bound translation factors. This is Large ribosomal subunit protein uL11 from Chlamydia trachomatis serovar A (strain ATCC VR-571B / DSM 19440 / HAR-13).